We begin with the raw amino-acid sequence, 211 residues long: Glutathione S-transferase (211 aa).

The 85-residue stretch at 3 to 87 (DNIVLYYFDA…YLSKKYNICG (85 aa)) folds into the GST N-terminal domain. Glutathione is bound by residues 58-59 (QV), 71-72 (QS), aspartate 105, lysine 117, and threonine 121. The region spanning 89-211 (SELNEFYADM…YITNRKESVY (123 aa)) is the GST C-terminal domain.

Belongs to the GST superfamily. In terms of assembly, homodimer. In the absence of ligands two homodimers may interact to form a tetramer.

The catalysed reaction is RX + glutathione = an S-substituted glutathione + a halide anion + H(+). Its activity is regulated as follows. Inhibited by chloroquine, cibacron blue, ferriprotoporphyrin IX (hemin) and S-hexylglutathione. In terms of biological role, conjugation of reduced glutathione to a wide number of exogenous and endogenous hydrophobic electrophiles. May also function as a storage protein or ligandin for parasitotoxic ferriprotoporphyrin IX (hemin). The protein is Glutathione S-transferase of Plasmodium falciparum (isolate 3D7).